A 536-amino-acid polypeptide reads, in one-letter code: Glyco-Gag protein (536 aa).

At 1-54 (MSGASSGTATGARLFGISSVLGEYRVLIGDEGAGPSRSPSEVSFSVWYRSRAAR) the chain is on the cytoplasmic side. The chain crosses the membrane as a helical span at residues 55–75 (LVILCLVASFLVPCLTFLIAE). At 76 to 536 (TVMGQTVTTP…TQNRNKDREE (461 aa)) the chain is on the extracellular side. N-linked (GlcNAc...) asparagine; by host glycosylation occurs at N137. Disordered stretches follow at residues 174-284 (VRPF…NNRP) and 494-536 (ETPE…DREE). The span at 177–198 (FLPPPKPPTPLPQPLSPQPSAP) shows a compositional bias: pro residues. Residues 199-209 (PTSSLYPVLPK) are compositionally biased toward low complexity. Composition is skewed to pro residues over residues 210–223 (TNPPKPPVLPPDPS) and 233–246 (EPPPYPGGHGPPPS). Residues 494–511 (ETPEEREERLWQRQEERD) are compositionally biased toward basic and acidic residues.

Post-translationally, glycosylated by host. Cleaved by host near the middle of the molecule, releasing the c-terminal half containing capsid and nucleoprotein domains op GAG.

Its subcellular location is the host cell membrane. Plays a role in viral particle release. Presumably acts by facilitating the fission of the virion bud at the cell surface. This Feline sarcoma virus (strain McDonough) protein is Glyco-Gag protein.